The following is a 243-amino-acid chain: CTD nuclear envelope phosphatase 1 homolog (243 aa).

Residues 11 to 27 (ALLLLLSKVWTCICFMF) form a helical membrane-spanning segment. Positions 56 to 223 (SLVQRKTLVL…LSLLPMLDAL (168 aa)) constitute an FCP1 homology domain.

Belongs to the dullard family.

Its subcellular location is the membrane. The enzyme catalyses O-phospho-L-seryl-[protein] + H2O = L-seryl-[protein] + phosphate. It catalyses the reaction O-phospho-L-threonyl-[protein] + H2O = L-threonyl-[protein] + phosphate. Serine/threonine protein phosphatase that may dephosphorylate and activate lipin-like phosphatases. Lipins are phosphatidate phosphatases that catalyze the conversion of phosphatidic acid to diacylglycerol and control the metabolism of fatty acids at different levels. May indirectly modulate the lipid composition of nuclear and/or endoplasmic reticulum membranes and be required for proper nuclear membrane morphology and/or dynamics. May also indirectly regulate the production of lipid droplets and triacylglycerol. In Drosophila pseudoobscura pseudoobscura (Fruit fly), this protein is CTD nuclear envelope phosphatase 1 homolog (l(1)G0269).